A 104-amino-acid chain; its full sequence is Thioredoxin (104 aa).

Positions 2 to 104 constitute a Thioredoxin domain; the sequence is AIVKVTDSDF…NLAEVLDKHL (103 aa). A disulfide bridge connects residues C29 and C32.

Belongs to the thioredoxin family.

Component of the thioredoxin-thioredoxin reductase system. Participates in various redox reactions through the reversible oxidation of its active center dithiol to a disulfide and catalyzes dithiol-disulfide exchange reactions. In Staphylococcus epidermidis (strain ATCC 35984 / DSM 28319 / BCRC 17069 / CCUG 31568 / BM 3577 / RP62A), this protein is Thioredoxin (trxA).